The primary structure comprises 152 residues: Transcriptional regulator MraZ (152 aa).

SpoVT-AbrB domains lie at 5 to 52 (ASAI…PIHE) and 81 to 124 (AHEV…DEQA).

It belongs to the MraZ family. In terms of assembly, forms oligomers.

The protein localises to the cytoplasm. Its subcellular location is the nucleoid. This chain is Transcriptional regulator MraZ, found in Shewanella sp. (strain ANA-3).